We begin with the raw amino-acid sequence, 392 residues long: Bifunctional enzyme IspD/IspF (392 aa).

2 2-C-methyl-D-erythritol 4-phosphate cytidylyltransferase regions span residues 1 to 234 (MTES…MMRT) and 1 to 235 (MTES…MRTA). The tract at residues 235 to 392 (AVGMGYDVHR…AVATIQLPET (158 aa)) is 2-C-methyl-D-erythritol 2,4-cyclodiphosphate synthase. Residues aspartate 241 and histidine 243 each contribute to the a divalent metal cation site. 4-CDP-2-C-methyl-D-erythritol 2-phosphate is bound by residues 241–243 (DVH) and 267–268 (HS). An a divalent metal cation-binding site is contributed by histidine 275. 4-CDP-2-C-methyl-D-erythritol 2-phosphate is bound by residues 289-291 (DIG), 365-368 (TTTE), phenylalanine 372, and arginine 375.

In the N-terminal section; belongs to the IspD/TarI cytidylyltransferase family. IspD subfamily. It in the C-terminal section; belongs to the IspF family. It depends on a divalent metal cation as a cofactor.

It catalyses the reaction 2-C-methyl-D-erythritol 4-phosphate + CTP + H(+) = 4-CDP-2-C-methyl-D-erythritol + diphosphate. The catalysed reaction is 4-CDP-2-C-methyl-D-erythritol 2-phosphate = 2-C-methyl-D-erythritol 2,4-cyclic diphosphate + CMP. Its pathway is isoprenoid biosynthesis; isopentenyl diphosphate biosynthesis via DXP pathway; isopentenyl diphosphate from 1-deoxy-D-xylulose 5-phosphate: step 2/6. It participates in isoprenoid biosynthesis; isopentenyl diphosphate biosynthesis via DXP pathway; isopentenyl diphosphate from 1-deoxy-D-xylulose 5-phosphate: step 4/6. Functionally, bifunctional enzyme that catalyzes the formation of 4-diphosphocytidyl-2-C-methyl-D-erythritol from CTP and 2-C-methyl-D-erythritol 4-phosphate (MEP) (IspD), and catalyzes the conversion of 4-diphosphocytidyl-2-C-methyl-D-erythritol 2-phosphate (CDP-ME2P) to 2-C-methyl-D-erythritol 2,4-cyclodiphosphate (ME-CPP) with a corresponding release of cytidine 5-monophosphate (CMP) (IspF). The protein is Bifunctional enzyme IspD/IspF of Sphingopyxis alaskensis (strain DSM 13593 / LMG 18877 / RB2256) (Sphingomonas alaskensis).